We begin with the raw amino-acid sequence, 127 residues long: Aspartate 1-decarboxylase (127 aa).

S25 acts as the Schiff-base intermediate with substrate; via pyruvic acid in catalysis. Position 25 is a pyruvic acid (Ser) (S25). T57 contacts substrate. Y58 (proton donor) is an active-site residue. 73–75 lines the substrate pocket; sequence GAA.

Belongs to the PanD family. As to quaternary structure, heterooctamer of four alpha and four beta subunits. The cofactor is pyruvate. Is synthesized initially as an inactive proenzyme, which is activated by self-cleavage at a specific serine bond to produce a beta-subunit with a hydroxyl group at its C-terminus and an alpha-subunit with a pyruvoyl group at its N-terminus.

It localises to the cytoplasm. The enzyme catalyses L-aspartate + H(+) = beta-alanine + CO2. It functions in the pathway cofactor biosynthesis; (R)-pantothenate biosynthesis; beta-alanine from L-aspartate: step 1/1. Its function is as follows. Catalyzes the pyruvoyl-dependent decarboxylation of aspartate to produce beta-alanine. The chain is Aspartate 1-decarboxylase from Bacillus velezensis (strain DSM 23117 / BGSC 10A6 / LMG 26770 / FZB42) (Bacillus amyloliquefaciens subsp. plantarum).